The sequence spans 482 residues: MPIFVNTVYCKNILALYTTKKFKTIIEAIGGNIIVNSTILKKLSPYFRTHLRQKYTKNKDPVTRVCLDLDIHSLTSIVIYSYTGKVYIDSHNVVNLLRASILTSVEFIIYTCINFILRDFRKEYCIECYMMGIEYGLSNLLCHTKDFITKHFLELEDDIIDNFDYLSMKLILESDELNVPDEDYVVDFVIKWYMRRRNRLGNLLLLIKNVIRSNYLSPRGIHNVKWILDCNIIFHCDKQPRKSYKYPFIEYPMNMDQIIDIFHMCTSTHVGEVVYLIGGWMNNEIHNNAIAVNYISNNWIPIPPMNSPRLYASGIPANNKLYVVGGLPNPTSVERWFHGDAAWVNMPSLLKPRCNPAVASINNVIYVMGGHSETDTTTEYLLPNHDQWQFGPSTYYPHYKSCALVFGRRLFLVGRNAEFYCESSNTWTLIDDPIYPRDNPELIIVDNKLLLIGGFYRGSYIDTIEVYNNRTYSWNIWDGMEW.

The BTB domain maps to 20-90 (KKFKTIIEAI…SYTGKVYIDS (71 aa)). A BACK domain is found at 125–222 (CIECYMMGIE…SNYLSPRGIH (98 aa)). Kelch repeat units follow at residues 273 to 319 (VVYL…PANN), 320 to 363 (KLYV…SINN), 365 to 408 (IYVM…VFGR), 410 to 447 (LFLV…IVDN), and 448 to 482 (KLLL…GMEW).

Belongs to the orthopoxvirus OPG047 family.

In terms of biological role, might have a role in the suppression of host immune response. This chain is Immune evasion protein OPG047 (OPG047), found in Cynomys gunnisoni (Gunnison's prairie dog).